The sequence spans 1868 residues: MSIAIPLGVDTTETSYLEMAAGSEPESVEASPVVVEKSNSFPHQLYTSSSHHSHSYIGLPYADHNYGARPPPTPPASPPPSGLISKNEVGIFTTPNFDETSSATTISTSEDGSYGTDVTRCICGFTHDDGYMICCDKCSVWQHIDCMGIDRQHIPDTYLCERCQPRSLDKERAVLLQRRKRENMSDGDTSATESGDEVPVELYTAFQHTPTSITLTASRVPKVTDKRRKKSGEKEQNFSKCKKAFREGSRKSSRVKGSAPEIDPSSDSSNFVWETKIKAWMDRYEEANNNQYSEGVQREAQRLAQRLGSGNDSKDMNKSELSTNNSLFRPPVESHIQKNKKILKSAKDLPPDALIIEYRGKFMLREQFEANGYFFKRPYPFVLFYSKFHGLEMCVDARTFGNEARFIRRSCTPNAEVRHEIEEGTIHLYIYSIQSIPKGTEITIAFDFDYGNCKYKVDCACLKENPECPVLKRSSESTENINSGYETRRKKGKKEKDTSKEKDIQNQNMTLDCEGTNNKIRSPETKQRKLSPLRLSVSNNQEPDFIDDMEEKTPISNEVEMESEEQIAERKRKMTREERKMEAILQAFARLEKREKRREQALERISTAKTEVKPECKESQVIADAEVVQEQVKEETAIKPAAAKVNRTKQRKSFSRSRTHIGQQRRRHRTVSMCSDIPPSSPDIEVLSQQNEIENTVLAIEPETETAVAEIIPEAEVPALNKCPTKYPKTKKHLVNEWLSEKNEKTGKPSDSLSERPLRITTDPEVLATQLNSLPGLTYSPHVYSTPKHYIRFTSPFLSEKKRRKETTENISGSCKKRWLKQALEEENSTILHRYHSPCQERSRSPTVNGENKSPLLLSDSCSLPDLTTPLKKRRLYQLLDTAYSESSTPTPSPYATPTHTDITPTDPAFATPPRIKSDDETYRNGYKPIYSPVTPVTPGTPGNTMHFENISSPESSPEIKRCTYNQEGYDRPSNMLTLGPFRNSNLTELGLQEIKTIGYTSPRSRTEVNRPCPGEKESVSDLQLGLDAVEPAALQKSMETPAHDRTEPSNQLDSTHSGRGTMYSSWVKSPDRTGVNFSVNSNLRDLTPSHQLETGGGFRVSESKCLIQQDDTRGMFLGAAVFCTSEDGLASGFGRTVNDNLIDGSCTPQNPPQKKKVSLLEYRKRQREARKSGSKPENFALISVSPHPSGSLSSSGDGCVHSSENGEQAENQASLPLPPPAAAAAATAAAAYSASSEEGSSNCPVKDANSSEKKDPEVQWTASTSVEQVRERSYQRALLLSDHRKDKDSGGESPCVSCSPSHVQSPPSSHSNHIPQVHAQSLAPSLSELMADPDAEGTEATSTSECPSPDTSQSPSKTSKPGSPGPINPAQSHGKILTKPDSHWEATATVSEADNSVHQNPEPQHRQLSSNTPALSQNHAPQAHALSANDQLPQKLPSAPTKLHCPPSPHTENPPKSSTPHTPVQHGYLSPKPPSQHLGSPFRPHHSQSPQVGTPQRETQRNFYAAAQNLQANPQQATSGALFTQTPSGQSSATYSQFNQQSLNSTAPPPPPPPPPSSYYQNQQPSANFQNYNQLKGSLSQQTVFTSGPNQALPGSTSQQSVPGHHVTPGHFLPSQNPTIHHQPAAAAVVPPPPPPPPAPGPHLIQQPSSHQQHSVAHGVGPVHAVTPGSHIHSQTAGHHLPPPPPPPGPAPHHHPPPHPTTGLQSLQAQHQHVVNSAPPPPPPPPPPPPASVLVSGHHSASGQALHHPPHQGPPLFPASAHPAVPPYPSQATHHTTLGPGPQHQPSGTGPHCPLPVAGPHLQPQGPNSIPTPTASGFCPHPHPGSVALPHGVQGPQQASPVPAQIPIHRAQVPPTFQNNYHGSGWH.

An HCFC1-binding motif (HBM) motif is present at residues 63–66 (DHNY). A PHD-type zinc finger spans residues 118-166 (VTRCICGFTHDDGYMICCDKCSVWQHIDCMGIDRQHIPDTYLCERCQPR). Cys-121, Cys-123, Cys-135, Cys-138, His-143, Cys-146, Cys-160, and Cys-163 together coordinate Zn(2+). Disordered stretches follow at residues 178-197 (RRKR…SGDE), 217-268 (ASRV…SSDS), and 308-329 (GSGN…SLFR). Positions 330 to 447 (PPVESHIQKN…KGTEITIAFD (118 aa)) constitute an SET domain. An O-linked (GlcNAc) serine glycan is attached at Ser-435. O-linked (GlcNAc) threonine glycosylation occurs at Thr-440. Residues 472 to 504 (KRSSESTENINSGYETRRKKGKKEKDTSKEKDI) form a disordered region. Over residues 494-504 (KEKDTSKEKDI) the composition is skewed to basic and acidic residues. Residues 559–613 (VEMESEEQIAERKRKMTREERKMEAILQAFARLEKREKRREQALERISTAKTEVK) are a coiled coil. Basic residues predominate over residues 646–670 (NRTKQRKSFSRSRTHIGQQRRRHRT). A disordered region spans residues 646–682 (NRTKQRKSFSRSRTHIGQQRRRHRTVSMCSDIPPSSP). Phosphoserine occurs at positions 837 and 845. Over residues 884–908 (YSESSTPTPSPYATPTHTDITPTDP) the composition is skewed to low complexity. Disordered regions lie at residues 884–924 (YSES…ETYR) and 1038–1068 (SMET…SSWV). Over residues 1049-1068 (PSNQLDSTHSGRGTMYSSWV) the composition is skewed to polar residues. Ser-1070 carries the post-translational modification Phosphoserine. 4 disordered regions span residues 1165–1222 (KRQR…PPPA), 1236–1315 (SSEE…SNHI), 1334–1565 (PDAE…QNQQ), and 1585–1842 (VFTS…QASP). The span at 1184 to 1197 (SVSPHPSGSLSSSG) shows a compositional bias: low complexity. Polar residues predominate over residues 1203–1213 (SSENGEQAENQ). The residue at position 1282 (Ser-1282) is a Phosphoserine. Positions 1282–1291 (SDHRKDKDSG) are enriched in basic and acidic residues. Composition is skewed to low complexity over residues 1294–1312 (SPCV…SSHS) and 1348–1363 (PSPD…SKPG). Ser-1364 carries the post-translational modification Phosphoserine. Composition is skewed to polar residues over residues 1389–1421 (ATVS…QNHA), 1451–1463 (HTEN…TPHT), and 1488–1498 (SQSPQVGTPQR). The segment covering 1506–1518 (AAAQNLQANPQQA) has biased composition (low complexity). A compositionally biased stretch (polar residues) spans 1519–1547 (TSGALFTQTPSGQSSATYSQFNQQSLNST). Pro residues predominate over residues 1548–1558 (APPPPPPPPPS). The span at 1585-1603 (VFTSGPNQALPGSTSQQSV) shows a compositional bias: polar residues. Pro residues predominate over residues 1631–1642 (VPPPPPPPPAPG). The span at 1647–1656 (QQPSSHQQHS) shows a compositional bias: polar residues. Over residues 1682 to 1692 (LPPPPPPPGPA) the composition is skewed to pro residues. A compositionally biased stretch (polar residues) spans 1706 to 1716 (QSLQAQHQHVV). The span at 1719–1732 (APPPPPPPPPPPPA) shows a compositional bias: pro residues. Positions 1806–1816 (QGPNSIPTPTA) are enriched in polar residues.

Belongs to the class V-like SAM-binding methyltransferase superfamily. Histone-lysine methyltransferase family. TRX/MLL subfamily. Component of a complex composed of KMT2E, OGT and USP7; the complex stabilizes KMT2E, preventing KMT2E ubiquitination and proteasomal-mediated degradation. Interacts (via N-terminus) with OGT (via TRP repeats). Interacts with deubiquitinating enzyme USP7 (via MATH domain). Interacts (via HBM motif) with HCFC1 (via Kelch domain). Interacts with E2F1; the interaction is probably indirect and is mediated via HCFC1. Post-translationally, ubiquitinated. Deubiquitinated by USP7. In terms of processing, O-glycosylated at Ser-435 and Thr-440 in the SET domain by OGT which probably prevents KMT2E proteasomal-mediated degradation.

It is found in the chromosome. Its subcellular location is the cytoplasm. The protein resides in the cytoskeleton. It localises to the microtubule organizing center. The protein localises to the centrosome. It is found in the nucleus speckle. Its function is as follows. Associates with chromatin regions downstream of transcriptional start sites of active genes and thus regulates gene transcription. Chromatin interaction is mediated via the binding to tri-methylated histone H3 at 'Lys-4' (H3K4me3). Key regulator of hematopoiesis involved in terminal myeloid differentiation and in the regulation of hematopoietic stem cell (HSCs) self-renewal by a mechanism that involves DNA methylation. Also acts as an important cell cycle regulator, participating in cell cycle regulatory network machinery at multiple cell cycle stages including G1/S transition, S phase progression and mitotic entry. Recruited to E2F1 responsive promoters by HCFC1 where it stimulates tri-methylation of histone H3 at 'Lys-4' and transcriptional activation and thereby facilitates G1 to S phase transition. During myoblast differentiation, required to suppress inappropriate expression of S-phase-promoting genes and maintain expression of determination genes in quiescent cells. The polypeptide is Inactive histone-lysine N-methyltransferase 2E (Kmt2e) (Mus musculus (Mouse)).